We begin with the raw amino-acid sequence, 161 residues long: uncharacterized protein (161 aa).

This sequence belongs to the M.jannaschii MJ0150/MJ0739/MJ0745/MJ1460/MJ1642 family.

This is an uncharacterized protein from Methanocaldococcus jannaschii (strain ATCC 43067 / DSM 2661 / JAL-1 / JCM 10045 / NBRC 100440) (Methanococcus jannaschii).